Consider the following 165-residue polypeptide: Ribosome maturation factor RimM (165 aa).

Positions 94–165 (EDEFYIADLN…YGILNYKREV (72 aa)) constitute a PRC barrel domain.

The protein belongs to the RimM family. In terms of assembly, binds ribosomal protein uS19.

It is found in the cytoplasm. An accessory protein needed during the final step in the assembly of 30S ribosomal subunit, possibly for assembly of the head region. Essential for efficient processing of 16S rRNA. May be needed both before and after RbfA during the maturation of 16S rRNA. It has affinity for free ribosomal 30S subunits but not for 70S ribosomes. This is Ribosome maturation factor RimM from Rickettsia canadensis (strain McKiel).